Here is an 842-residue protein sequence, read N- to C-terminus: DNA topoisomerase-like protein cin-4 (842 aa).

Positions 1 to 26 (MSEEDRNVFTSIDKKGGGSKQMDDLN) are enriched in basic and acidic residues. Positions 1 to 50 (MSEEDRNVFTSIDKKGGGSKQMDDLNQKCPKRKTSKLKGIPKLEDANDAG) are disordered. The 470-residue stretch at 314 to 783 (IPCLVDGLKP…TWQDLWITDL (470 aa)) folds into the Topo IIA-type catalytic domain.

Belongs to the type II topoisomerase family.

In terms of biological role, plays a role in the removal of cohesin from kinetochores on mitotic chromosomes and is required for centromere resolution. The sequence is that of DNA topoisomerase-like protein cin-4 from Caenorhabditis elegans.